A 145-amino-acid polypeptide reads, in one-letter code: UI (145 aa).

An N-terminal signal peptide occupies residues 1-22 (MKPVPLVLLITSVLLTTHIPLS). Val-143 bears the Valine amide mark.

This sequence belongs to the sauvagine/corticotropin-releasing factor/urotensin I family.

It localises to the secreted. In terms of biological role, urotensin is found in the teleost caudal neurosecretory system. It has a suggested role in osmoregulation and as a corticotropin-releasing factor. The non-hormonal portion of this precursor may be a urotensin binding protein, urophysin. The sequence is that of UI from Carassius auratus (Goldfish).